Reading from the N-terminus, the 871-residue chain is Tegument protein UL47 homolog (871 aa).

Residues 1–212 form a disordered region; it reads MDQHHGARGG…DEDDMEVIRD (212 aa). A Nuclear localization signal motif is present at residues 13 to 33; sequence IRRPRRSIESRSHPFRATGNT. Composition is skewed to polar residues over residues 30 to 41 and 59 to 81; these read TGNTQRTYSTPR and EQASNQDESSNPSTSNAQQSTSF. 3 stretches are compositionally biased toward acidic residues: residues 114–134, 146–155, and 185–207; these read SSSEEEEEEGPAQAPLDEEDQ, SSDENDEEED, and SESETDIDAEEEEEDDEDDEDDM.

The protein belongs to the alphaherpesvirinae HHV-1 UL47 family. As to quaternary structure, interacts with US3 kinase. Interacts with UL31 and UL34; these interactions seem important for efficient virion nuclear egress. Interacts with UL41/VHS. Post-translationally, phosphorylated by US3. This phosphorylation is required for proper nuclear localization.

The protein resides in the virion tegument. Its subcellular location is the host nucleus. The protein localises to the host cytoplasm. In terms of biological role, tegument protein that can bind to various RNA transcripts. Plays a role in the attenuation of selective viral and cellular mRNA degradation by modulating the activity of host shutoff RNase UL41/VHS. Also plays a role in the primary envelopment of virions in the perinuclear space, probably by interacting with two nuclear egress proteins UL31 and UL34. The protein is Tegument protein UL47 homolog of Equus caballus (Horse).